The chain runs to 527 residues: Formate--tetrahydrofolate ligase (527 aa).

An ATP-binding site is contributed by 53 to 60 (TSSGEGKT).

This sequence belongs to the formate--tetrahydrofolate ligase family.

The catalysed reaction is (6S)-5,6,7,8-tetrahydrofolate + formate + ATP = (6R)-10-formyltetrahydrofolate + ADP + phosphate. Its pathway is one-carbon metabolism; tetrahydrofolate interconversion. This Acholeplasma laidlawii (strain PG-8A) protein is Formate--tetrahydrofolate ligase.